We begin with the raw amino-acid sequence, 195 residues long: NADH-quinone oxidoreductase subunit C (195 aa).

It belongs to the complex I 30 kDa subunit family. In terms of assembly, NDH-1 is composed of 14 different subunits. Subunits NuoB, C, D, E, F, and G constitute the peripheral sector of the complex.

The protein resides in the cell inner membrane. It carries out the reaction a quinone + NADH + 5 H(+)(in) = a quinol + NAD(+) + 4 H(+)(out). Functionally, NDH-1 shuttles electrons from NADH, via FMN and iron-sulfur (Fe-S) centers, to quinones in the respiratory chain. The immediate electron acceptor for the enzyme in this species is believed to be ubiquinone. Couples the redox reaction to proton translocation (for every two electrons transferred, four hydrogen ions are translocated across the cytoplasmic membrane), and thus conserves the redox energy in a proton gradient. This chain is NADH-quinone oxidoreductase subunit C, found in Laribacter hongkongensis (strain HLHK9).